Here is a 316-residue protein sequence, read N- to C-terminus: MSDVSKASLPKAIFLMGPTASGKTALAIELRKVLPVELISVDSALIYQGMDVGTAKPNAEELHAAPHRLLDILDPAQAYSAADFRRDALAEMAEITAAGRIPLLVGGTMLYFKALLEGLSPLPSADPEVRAKIEQQAAEQGWSALHKQLEEVDPVAAARIHPNDPQRLSRALEVFFISGKTLTELTQTSGEALPYQVHQFAIAPASRELLHQRIEQRFHQMLASGFEAEVRALFARGDLHTDMPSIRCVGYRQIWSYIEGEISYDEMVYRGVCATRQLAKRQITWLRGWEGIHWLDSEKPEQSYNEVLQVVGAIAD.

Gly17–Thr24 contacts ATP. Residue Thr19–Thr24 participates in substrate binding. 4 interaction with substrate tRNA regions span residues Asp42 to Leu45, Gln166 to Arg170, Arg247 to Arg252, and Lys280 to Arg287.

This sequence belongs to the IPP transferase family. As to quaternary structure, monomer. Requires Mg(2+) as cofactor.

It catalyses the reaction adenosine(37) in tRNA + dimethylallyl diphosphate = N(6)-dimethylallyladenosine(37) in tRNA + diphosphate. Its function is as follows. Catalyzes the transfer of a dimethylallyl group onto the adenine at position 37 in tRNAs that read codons beginning with uridine, leading to the formation of N6-(dimethylallyl)adenosine (i(6)A). In Enterobacter sp. (strain 638), this protein is tRNA dimethylallyltransferase.